A 177-amino-acid chain; its full sequence is CASP-like protein 4D1 (177 aa).

The Cytoplasmic segment spans residues 1–20; that stretch reads MTAPTAPSMAAPPAPSMVSR. The chain crosses the membrane as a helical span at residues 21–41; the sequence is MTALFLRVLTFAFLMVSLVIM. Residues 42–66 are Extracellular-facing; sequence TTNTGTIEIGIDEFKVRSKDFYSYR. Residues 67–87 traverse the membrane as a helical segment; sequence YMLAAIAFGLTYTILQIALTL. Topologically, residues 88–107 are cytoplasmic; that stretch reads NHISKRNGAQTSGDGNLVFD. A helical membrane pass occupies residues 108-128; sequence FYGDKVVSYILATGAAAAFGA. Residues 129–153 lie on the Extracellular side of the membrane; the sequence is TKELKTQLAGLGGDKFFNKGYASAS. A helical transmembrane segment spans residues 154–174; the sequence is LLLLGFVCTAILSVFSSYALP. At 175-177 the chain is on the cytoplasmic side; that stretch reads KKV.

Belongs to the Casparian strip membrane proteins (CASP) family. In terms of assembly, homodimer and heterodimers.

The protein localises to the cell membrane. The chain is CASP-like protein 4D1 from Populus trichocarpa (Western balsam poplar).